Reading from the N-terminus, the 115-residue chain is MAVLALLFCLVTFPSCILSQVQLKESGPGLVAPSQSLSITCTVSGFSLTGYGVNWVRQPPGKGLEWLGMIWGDGSTDYNSALKSRLSISKDNSKSQVFLKMNSLQTDDTARYYCA.

Residues 1 to 19 (MAVLALLFCLVTFPSCILS) form the signal peptide. One can recognise an Ig-like domain in the interval 20 to 115 (QVQLKESGPG…TDDTARYYCA (96 aa)).

The sequence is that of Ig heavy chain V region PJ14 from Mus musculus (Mouse).